A 65-amino-acid chain; its full sequence is Large ribosomal subunit protein bL35 (65 aa).

The span at 1 to 16 shows a compositional bias: basic residues; that stretch reads MPKMKTKKSAAKRFKV. Positions 1–25 are disordered; the sequence is MPKMKTKKSAAKRFKVRGSGSIKRG.

This sequence belongs to the bacterial ribosomal protein bL35 family.

The polypeptide is Large ribosomal subunit protein bL35 (Bordetella parapertussis (strain 12822 / ATCC BAA-587 / NCTC 13253)).